Here is an 89-residue protein sequence, read N- to C-terminus: uncharacterized protein (89 aa).

The tract at residues 66–89 (RIKEQSSSSSATRTTQEPSLHLPD) is disordered.

This is an uncharacterized protein from Cestrum parqui (CmYLCV).